Consider the following 221-residue polypeptide: CASP-like protein 4C1 (221 aa).

The tract at residues 1 to 21 (MDSPESSDRGLNPMTPDHGGH) is disordered. The Cytoplasmic segment spans residues 1–54 (MDSPESSDRGLNPMTPDHGGHNGKVVHYFGQGVEGGPASPRKLGHGHLHPKANT). Residues 55–75 (ALLLLRLLTFAFSLASLVIMA) traverse the membrane as a helical segment. At 76-101 (TNSATTTATAGRHRTVNWVDFDTYRY) the chain is on the extracellular side. A helical transmembrane segment spans residues 102-122 (VLAACAIVCLYSFAEIGLGLW). Over 123-144 (YLLKGRMVMPESMAHWFDFGHD) the chain is Cytoplasmic. The helical transmembrane segment at 145-165 (QGFAYLIFSACSGATAVAHNL) threads the bilayer. The Extracellular segment spans residues 166-189 (RERHILIHGMYGCDEANSFCMKAE). A helical membrane pass occupies residues 190–210 (ISIGLAFGAFLFIALSSLLSG). Residues 211 to 221 (YRLVKWLILGP) lie on the Cytoplasmic side of the membrane.

It belongs to the Casparian strip membrane proteins (CASP) family. Homodimer and heterodimers.

The protein resides in the cell membrane. The polypeptide is CASP-like protein 4C1 (Pteridium aquilinum subsp. aquilinum (Bracken fern)).